Reading from the N-terminus, the 355-residue chain is Cyclic nucleotide-gated potassium channel mll3241 (355 aa).

Residues 1–12 are Cytoplasmic-facing; that stretch reads MSVLPFLRIYAP. A helical membrane pass occupies residues 13–30; the sequence is LNAVLAAPGLLAVAALTI. Residues 31 to 38 are Periplasmic-facing; it reads PDMSGRSR. The chain crosses the membrane as a helical span at residues 39–61; it reads LALAALLAVIWGAYLLQLAATLL. Topologically, residues 62–74 are cytoplasmic; sequence KRRAGVVRDRTPK. A helical transmembrane segment spans residues 75–94; it reads IAIDVLAVLVPLAAFLLDGS. Residues 95–112 traverse the membrane as a helical segment; sequence PDWSLYCAVWLLKPLRDS. Residues 113–129 are Cytoplasmic-facing; the sequence is TFFPVLGRVLANEARNL. A helical membrane pass occupies residues 130–150; the sequence is IGVTTLFGVVLFAVALAAYVI. The Periplasmic segment spans residues 151 to 161; the sequence is ERDIQPEKFGS. The segment at residues 162–180 is an intramembrane region (pore-forming); the sequence is IPQAMWWAVVTLSTTGYGD. Residues 175 to 180 carry the Selectivity filter motif; sequence TTGYGD. Topologically, residues 181–185 are periplasmic; the sequence is TIPQS. Residues 186 to 210 traverse the membrane as a helical segment; it reads FAGRVLAGAVMMSGIGIFGLWAGIL. Residues 211 to 355 lie on the Cytoplasmic side of the membrane; that stretch reads ATGFYQEVRR…LERRGAAASA (145 aa). 3',5'-cyclic AMP-binding positions include 297-298, 307-308, and Arg348; these read GE and RS.

This sequence belongs to the potassium channel family. As to quaternary structure, homotetramer.

Its subcellular location is the cell membrane. In terms of biological role, cyclic nucleotide-regulated potassium channel activated by cAMP. The sequence is that of Cyclic nucleotide-gated potassium channel mll3241 from Mesorhizobium japonicum (strain LMG 29417 / CECT 9101 / MAFF 303099) (Mesorhizobium loti (strain MAFF 303099)).